The sequence spans 354 residues: Probable dual-specificity RNA methyltransferase RlmN (354 aa).

Glu94 acts as the Proton acceptor in catalysis. Residues 103-332 form the Radical SAM core domain; it reads GRRRNTACLS…QEAGLEAAIR (230 aa). A disulfide bond links Cys110 and Cys343. Cys117, Cys121, and Cys124 together coordinate [4Fe-4S] cluster. S-adenosyl-L-methionine-binding positions include 169–170, Ser201, 224–226, and Asn300; these read GE and SLH. Catalysis depends on Cys343, which acts as the S-methylcysteine intermediate.

This sequence belongs to the radical SAM superfamily. RlmN family. Requires [4Fe-4S] cluster as cofactor.

The protein resides in the cytoplasm. It catalyses the reaction adenosine(2503) in 23S rRNA + 2 reduced [2Fe-2S]-[ferredoxin] + 2 S-adenosyl-L-methionine = 2-methyladenosine(2503) in 23S rRNA + 5'-deoxyadenosine + L-methionine + 2 oxidized [2Fe-2S]-[ferredoxin] + S-adenosyl-L-homocysteine. The catalysed reaction is adenosine(37) in tRNA + 2 reduced [2Fe-2S]-[ferredoxin] + 2 S-adenosyl-L-methionine = 2-methyladenosine(37) in tRNA + 5'-deoxyadenosine + L-methionine + 2 oxidized [2Fe-2S]-[ferredoxin] + S-adenosyl-L-homocysteine. Specifically methylates position 2 of adenine 2503 in 23S rRNA and position 2 of adenine 37 in tRNAs. This Moorella thermoacetica (strain ATCC 39073 / JCM 9320) protein is Probable dual-specificity RNA methyltransferase RlmN.